The chain runs to 426 residues: Histidine--tRNA ligase (426 aa).

Belongs to the class-II aminoacyl-tRNA synthetase family. As to quaternary structure, homodimer.

It localises to the cytoplasm. The catalysed reaction is tRNA(His) + L-histidine + ATP = L-histidyl-tRNA(His) + AMP + diphosphate + H(+). The polypeptide is Histidine--tRNA ligase (Colwellia psychrerythraea (strain 34H / ATCC BAA-681) (Vibrio psychroerythus)).